The chain runs to 341 residues: L-threonine 3-dehydrogenase (341 aa).

Position 38 (Cys38) interacts with Zn(2+). Residues Thr40 and His43 each act as charge relay system in the active site. Residues His63, Glu64, Cys93, Cys96, Cys99, and Cys107 each coordinate Zn(2+). Residues Ile175, Asp195, Arg200, 262–264, and 286–287 contribute to the NAD(+) site; these read LGI and IY.

This sequence belongs to the zinc-containing alcohol dehydrogenase family. Homotetramer. Zn(2+) is required as a cofactor.

It is found in the cytoplasm. The enzyme catalyses L-threonine + NAD(+) = (2S)-2-amino-3-oxobutanoate + NADH + H(+). It functions in the pathway amino-acid degradation; L-threonine degradation via oxydo-reductase pathway; glycine from L-threonine: step 1/2. In terms of biological role, catalyzes the NAD(+)-dependent oxidation of L-threonine to 2-amino-3-ketobutyrate. This is L-threonine 3-dehydrogenase from Chromobacterium violaceum (strain ATCC 12472 / DSM 30191 / JCM 1249 / CCUG 213 / NBRC 12614 / NCIMB 9131 / NCTC 9757 / MK).